The chain runs to 158 residues: Rhombotin-2 (158 aa).

LIM zinc-binding domains are found at residues 30-89 (CGGC…RLFG) and 94-153 (CASC…EWTK).

As to quaternary structure, interacts via its LIM domains with ELF2 and LDB1. Also interacts with basic helix-loop-helix protein TAL1/SCL and can assemble in a complex with LMO2 and TAL1/SCL. Interacts with BEX2 and KDM5A.

Its subcellular location is the nucleus. Its function is as follows. Acts with TAL1/SCL to regulate red blood cell development. Also acts with LDB1 to maintain erythroid precursors in an immature state. The protein is Rhombotin-2 (LMO2) of Homo sapiens (Human).